A 230-amino-acid chain; its full sequence is MCSDLIPRGVDYTKFRDAIIKWYREFGEKDLPWRKAGDPWAVLVAALLLRKTTVKQVVDIYREFLRRYPSPARLADASVEEIKAIIQPLGMEHVRATLLKKLSEELVRRFNGQIPCDRDALKSLPGVGDYAASEVLLTACGKPEPLLDRNMIRVIERVFGIKSKKRRPHTDRELWNFARSLVPRDPELAKEFNFGVLDFARKVCTAKSPKCSLCPLANNVCVFYQKRERV.

4 residues coordinate [4Fe-4S] cluster: Cys-204, Cys-211, Cys-214, and Cys-221.

The protein belongs to the Nth/MutY family. Requires [4Fe-4S] cluster as cofactor.

The enzyme catalyses Hydrolyzes mismatched double-stranded DNA and polynucleotides, releasing free thymine.. Its function is as follows. DNA glycosylase that excises thymine from T/G mismatches and uracil from U/G mismatches. Can also process T/GO and U/GO, but not A/G, T/C and U/C. Has weak AP lyase activity. This chain is Thymine/uracil-DNA glycosylase, found in Pyrobaculum aerophilum (strain ATCC 51768 / DSM 7523 / JCM 9630 / CIP 104966 / NBRC 100827 / IM2).